The chain runs to 226 residues: PKHD-type hydroxylase PiuC (226 aa).

The Fe2OG dioxygenase domain maps to 78 to 178; it reads KVFPPLFNCY…RYASFFWTQS (101 aa). Fe cation-binding residues include H96, D98, and H159. Position 169 (R169) interacts with 2-oxoglutarate.

The cofactor is Fe(2+). L-ascorbate is required as a cofactor.

This chain is PKHD-type hydroxylase PiuC (piuC), found in Pseudomonas aeruginosa (strain ATCC 15692 / DSM 22644 / CIP 104116 / JCM 14847 / LMG 12228 / 1C / PRS 101 / PAO1).